Here is a 372-residue protein sequence, read N- to C-terminus: Chorismate synthase (372 aa).

Position 48 (Arg48) interacts with NADP(+). FMN is bound by residues 125 to 127 (RSS), Gly285, 300 to 304 (KPTPS), and Arg327.

It belongs to the chorismate synthase family. FMNH2 serves as cofactor.

It catalyses the reaction 5-O-(1-carboxyvinyl)-3-phosphoshikimate = chorismate + phosphate. It functions in the pathway metabolic intermediate biosynthesis; chorismate biosynthesis; chorismate from D-erythrose 4-phosphate and phosphoenolpyruvate: step 7/7. Its function is as follows. Catalyzes the anti-1,4-elimination of the C-3 phosphate and the C-6 proR hydrogen from 5-enolpyruvylshikimate-3-phosphate (EPSP) to yield chorismate, which is the branch point compound that serves as the starting substrate for the three terminal pathways of aromatic amino acid biosynthesis. This reaction introduces a second double bond into the aromatic ring system. The polypeptide is Chorismate synthase (Methanocella arvoryzae (strain DSM 22066 / NBRC 105507 / MRE50)).